The following is a 136-amino-acid chain: Protein NrdI (136 aa).

The protein belongs to the NrdI family.

Functionally, probably involved in ribonucleotide reductase function. In Salmonella agona (strain SL483), this protein is Protein NrdI.